The chain runs to 201 residues: Small ribosomal subunit protein uS4 (201 aa).

An S4 RNA-binding domain is found at 91-157 (SRLDNVIYRA…VPFQIARETV (67 aa)).

This sequence belongs to the universal ribosomal protein uS4 family. In terms of assembly, part of the 30S ribosomal subunit. Contacts protein S5. The interaction surface between S4 and S5 is involved in control of translational fidelity.

Its function is as follows. One of the primary rRNA binding proteins, it binds directly to 16S rRNA where it nucleates assembly of the body of the 30S subunit. In terms of biological role, with S5 and S12 plays an important role in translational accuracy. The polypeptide is Small ribosomal subunit protein uS4 (Mycobacterium leprae (strain Br4923)).